Reading from the N-terminus, the 243-residue chain is Peptidyl-tRNA hydrolase (243 aa).

Position 14 (Y14) interacts with tRNA. Residue H19 is the Proton acceptor of the active site. Residues Y64, N66, and N112 each coordinate tRNA. Residues 190–207 (KAEEEKPRKEGKDGEKKP) show a composition bias toward basic and acidic residues. Residues 190-243 (KAEEEKPRKEGKDGEKKPAGQSHIRQARSSNQPKLPATGPMAEMLKKMFGNKGE) form a disordered region. Over residues 212 to 222 (HIRQARSSNQP) the composition is skewed to polar residues.

Belongs to the PTH family. In terms of assembly, monomer.

The protein localises to the cytoplasm. The catalysed reaction is an N-acyl-L-alpha-aminoacyl-tRNA + H2O = an N-acyl-L-amino acid + a tRNA + H(+). Its function is as follows. Hydrolyzes ribosome-free peptidyl-tRNAs (with 1 or more amino acids incorporated), which drop off the ribosome during protein synthesis, or as a result of ribosome stalling. In terms of biological role, catalyzes the release of premature peptidyl moieties from peptidyl-tRNA molecules trapped in stalled 50S ribosomal subunits, and thus maintains levels of free tRNAs and 50S ribosomes. The sequence is that of Peptidyl-tRNA hydrolase from Rhizobium etli (strain CIAT 652).